A 250-amino-acid polypeptide reads, in one-letter code: Lymphocyte function-associated antigen 3 (250 aa).

An N-terminal signal peptide occupies residues 1–28 (MVAGSDAGRALGVLSVVCLLHCFGFISC). Residues 29–215 (FSQQIYGVVY…IPSSGHSRHR (187 aa)) lie on the Extracellular side of the membrane. An Ig-like domain is found at 30-121 (SQQIYGVVYG…DTMKFFLYVL (92 aa)). 6 N-linked (GlcNAc...) asparagine glycosylation sites follow: asparagine 40, asparagine 94, asparagine 109, asparagine 135, asparagine 169, and asparagine 195. A disulfide bridge links cysteine 142 with cysteine 187. Residues 216-238 (YALIPIPLAVITTCIVLYMNGIL) form a helical membrane-spanning segment. Over 239-250 (KCDRKPDRTNSN) the chain is Cytoplasmic.

As to quaternary structure, interacts with CD2. Interacts with CMTM6. (Microbial infection) Interacts with human cytomegalovirus protein UL148; this interaction retains immature CD58 intracellularly.

It is found in the cell membrane. Its function is as follows. Ligand of the T-lymphocyte CD2 glycoprotein. This interaction is important in mediating thymocyte interactions with thymic epithelial cells, antigen-independent and -dependent interactions of T-lymphocytes with target cells and antigen-presenting cells and the T-lymphocyte rosetting with erythrocytes. In addition, the LFA-3/CD2 interaction may prime response by both the CD2+ and LFA-3+ cells. This Homo sapiens (Human) protein is Lymphocyte function-associated antigen 3 (CD58).